The primary structure comprises 698 residues: Macrophomene synthase (698 aa).

The tract at residues 21–340 is terpene cyclase; sequence MEYMYSVPLD…SCDRYSSYRR (320 aa). Asp-113 provides a ligand contact to Mg(2+). Positions 113-117 match the DDXXD 1 motif; it reads DNIAE. Residues 242–250 carry the NSE/DTE motif; the sequence is NDFFSFNYE. The prenyltransferase stretch occupies residues 341–696; it reads EKHQMELPIR…IQLALERLRI (356 aa). The tract at residues 368-387 is disordered; the sequence is LPNGKQLDAPTESSGKDLSD. Residues Lys-417, Arg-420, and His-449 each contribute to the isopentenyl diphosphate site. Residues Asp-456 and Asp-460 each coordinate Mg(2+). The DDXXD 2 signature appears at 456 to 460; sequence DDIED. Residue Arg-465 coordinates dimethylallyl diphosphate. Arg-466 serves as a coordination point for isopentenyl diphosphate. Residues Lys-543, Thr-544, Gln-579, Asn-586, Lys-596, and Lys-606 each coordinate dimethylallyl diphosphate.

It in the N-terminal section; belongs to the terpene synthase family. This sequence in the C-terminal section; belongs to the FPP/GGPP synthase family. In terms of assembly, hexamer. Mg(2+) serves as cofactor.

The enzyme catalyses 5 isopentenyl diphosphate + dimethylallyl diphosphate = all-trans-hexaprenyl diphosphate + 5 diphosphate. It catalyses the reaction all-trans-hexaprenyl diphosphate = macrophomene + diphosphate. In terms of biological role, bifunctional terpene synthase that converts dimethylallyl diphosphate (DMAPP) and isopentenyl diphosphate (IPP) into macrophomene as a single product. The C-terminal prenyltransferase (PT) domain of MpMS catalyzes formation of hexaprenyl diphosphate (HexPP), whereas the N-terminal terpene cyclase (TC) domain catalyzes the cyclization of HexPP to macrophomene. This is Macrophomene synthase from Macrophomina phaseolina (strain MS6) (Charcoal rot fungus).